A 294-amino-acid chain; its full sequence is Glycine--tRNA ligase alpha subunit (294 aa).

The protein belongs to the class-II aminoacyl-tRNA synthetase family. As to quaternary structure, tetramer of two alpha and two beta subunits.

The protein resides in the cytoplasm. The catalysed reaction is tRNA(Gly) + glycine + ATP = glycyl-tRNA(Gly) + AMP + diphosphate. This is Glycine--tRNA ligase alpha subunit from Oleidesulfovibrio alaskensis (strain ATCC BAA-1058 / DSM 17464 / G20) (Desulfovibrio alaskensis).